Reading from the N-terminus, the 372-residue chain is UDP-N-acetylglucosamine 2-epimerase (372 aa).

Residues R10, K15, D95, E117, H212, Q270, F275, 289–291 (SGG), E295, and R312 each bind substrate.

The protein belongs to the UDP-N-acetylglucosamine 2-epimerase family.

The enzyme catalyses UDP-N-acetyl-alpha-D-glucosamine = UDP-N-acetyl-alpha-D-mannosamine. It functions in the pathway capsule biogenesis; capsule polysaccharide biosynthesis. With respect to regulation, activated by UDP-GlcNAc and inhibited by 2-acetamidoglucal and UDP. Activity is strongly decreased in the presence of Co(2+) and abolished in the presence of Mn(2+) or Zn(2+). Catalyzes the interconversion between UDP-N-acetylglucosamine (UDP-GlcNAc) and UDP-N-acetylmannosamine (UDP-ManNAc). Involved in the biosynthesis of the capsular polysaccharides. In vitro, can also use several chemoenzymatically synthesized UDP-ManNAc derivatives as substrates, with lower efficiency. This is UDP-N-acetylglucosamine 2-epimerase from Neisseria meningitidis serogroup A / serotype 4A (strain DSM 15465 / Z2491).